We begin with the raw amino-acid sequence, 130 residues long: MVRISVLNDALKSMFNAEKRGKRQVMIRPSSKVIIKFLIVMQKHGYIGEFEYVDDHRSGKIVVELNGRLNKCGVISPRFDVGVKEIEGWTARLLPSRQFGYIVLTTSAGIMDHEEARRKNVGGKVLGFFY.

Belongs to the universal ribosomal protein uS8 family.

The protein resides in the cytoplasm. The sequence is that of Small ribosomal subunit protein uS8 (RPS15A) from Brassica napus (Rape).